Consider the following 430-residue polypeptide: Nitroalkane oxidase (430 aa).

Residues 132–135 (LVFS), 140–142 (VAN), 170–172 (WAT), R301, Q311, 372–376 (NAVGI), and 397–401 (IFDGG) contribute to the FAD site. D399 acts as the Proton acceptor in catalysis.

This sequence belongs to the acyl-CoA dehydrogenase family. Homotetramer. It depends on FAD as a cofactor.

It catalyses the reaction a primary nitroalkane + O2 + H2O = an aldehyde + nitrite + H2O2 + H(+). The enzyme catalyses a secondary nitroalkane + O2 + H2O = a ketone + nitrite + H2O2 + H(+). Its function is as follows. Nitroalkane oxidase (NAO) catalyzes the oxidation of nitroalkanes to the corresponding aldehydes or ketones with the release of nitrite and the consumption of molecular oxygen to yield hydrogen peroxide. NAO is unusual, since it catalyzes substrate oxidation by removing a substrate proton to form a carbanion intermediate. Prefers longer nitroalkanes, with 1-nitrohexane having the highest activity. The sequence is that of Nitroalkane oxidase from Podospora anserina (strain S / ATCC MYA-4624 / DSM 980 / FGSC 10383) (Pleurage anserina).